The primary structure comprises 179 residues: uncharacterized protein (179 aa).

4 helical membrane-spanning segments follow: residues 9–31 (WILVILFATLLFFAFTGIFVSTL), 41–63 (AFLLGFLGALVFANKLLFGYGSF), 114–136 (AYYGIFTLMLIIMLLSKFDLLGA), and 146–168 (AFWGAAVITLFVFALEITANYLM).

Its subcellular location is the cell membrane. This is an uncharacterized protein from Aquifex aeolicus (strain VF5).